The primary structure comprises 465 residues: Cysteine--tRNA ligase (465 aa).

Residue C29 coordinates Zn(2+). The short motif at 31-41 is the 'HIGH' region element; sequence PTVYNYIHIGN. C209, H234, and E238 together coordinate Zn(2+). A 'KMSKS' region motif is present at residues 266-270; that stretch reads KMSKS. K269 is a binding site for ATP. At S270 the chain carries Phosphoserine.

This sequence belongs to the class-I aminoacyl-tRNA synthetase family. In terms of assembly, monomer. It depends on Zn(2+) as a cofactor.

It localises to the cytoplasm. The enzyme catalyses tRNA(Cys) + L-cysteine + ATP = L-cysteinyl-tRNA(Cys) + AMP + diphosphate. The polypeptide is Cysteine--tRNA ligase (Bacillus cereus (strain AH187)).